Here is a 451-residue protein sequence, read N- to C-terminus: UPF0210 protein LMHCC_2097 (451 aa).

It belongs to the UPF0210 family. In terms of assembly, homodimer.

The sequence is that of UPF0210 protein LMHCC_2097 from Listeria monocytogenes serotype 4a (strain HCC23).